We begin with the raw amino-acid sequence, 269 residues long: Tryptophan synthase alpha chain (269 aa).

Residues Glu-49 and Asp-60 each act as proton acceptor in the active site.

This sequence belongs to the TrpA family. Tetramer of two alpha and two beta chains.

It carries out the reaction (1S,2R)-1-C-(indol-3-yl)glycerol 3-phosphate + L-serine = D-glyceraldehyde 3-phosphate + L-tryptophan + H2O. It participates in amino-acid biosynthesis; L-tryptophan biosynthesis; L-tryptophan from chorismate: step 5/5. Its function is as follows. The alpha subunit is responsible for the aldol cleavage of indoleglycerol phosphate to indole and glyceraldehyde 3-phosphate. The polypeptide is Tryptophan synthase alpha chain (Buchnera aphidicola subsp. Schlechtendalia chinensis).